A 1065-amino-acid chain; its full sequence is DNA ligase 4 (1065 aa).

Residues Met-1–Gln-20 form a disordered region. Residues Glu-295, Lys-297, Leu-298, Arg-302, Glu-357, Phe-387, Glu-452, Lys-457, Lys-474, and Lys-476 each coordinate ATP. Lys-297 (N6-AMP-lysine intermediate) is an active-site residue. Glu-357 is a Mg(2+) binding site. Mg(2+) is bound at residue Glu-452. One can recognise a BRCT 1 domain in the interval Val-696 to Leu-775. The tract at residues Gly-825–Tyr-928 is disordered. Basic and acidic residues-rich tracts occupy residues Glu-834–Gln-864 and Met-886–Arg-900. The BRCT 2 domain occupies Asp-954–Pro-1064.

It belongs to the ATP-dependent DNA ligase family. Mg(2+) is required as a cofactor.

It is found in the nucleus. The enzyme catalyses ATP + (deoxyribonucleotide)n-3'-hydroxyl + 5'-phospho-(deoxyribonucleotide)m = (deoxyribonucleotide)n+m + AMP + diphosphate.. Functionally, DNA ligase involved in DNA non-homologous end joining (NHEJ); required for double-strand break (DSB) repair. The chain is DNA ligase 4 (LIG4) from Cryptococcus neoformans var. neoformans serotype D (strain B-3501A) (Filobasidiella neoformans).